We begin with the raw amino-acid sequence, 463 residues long: MQSQDYKKRLKLQIIIILSIAVMSCGVPNVPTALSSLLERESIRVGTVYGAGTFYNGAEGPQGFEYELLAGFADYLGVTLDLYPFYSYEVMLEQLEEGNLDIVATGDAVTPALKRRFAYGPAYQRVEQELVFQAGATRPRDLAELDSPIIAVAGSSQAHLLSNLFKRLSEEEDEAVQTQLITTEDSDSEELLQQVANGDIAYTVADSNRLALQRRRYPNLAVARTLNENMPMAWALPLQQDDSVKAALIEYFGTVHQSGWFTVLEDKYFGHIRQFDYVDSRAFNYAAESTLTQYKSLFQKYAGDLDWRLLAAMSYQESHWNSDAISRTGVRGLMMLTLATASDWNVDDRTDPEQSIRGGSRYFASLLNRIPARISEPDRTWMAMASYNIGMGHLEDARILTEQQGGNPDLWVDVKRRLPQLRQKKYYRTTRYGYARGDEALQYVENIRRYYDSLVWLDEQGKI.

A signal peptide spans 1–33 (MQSQDYKKRLKLQIIIILSIAVMSCGVPNVPTA). Residues 34–272 (LSSLLERESI…VLEDKYFGHI (239 aa)) are non-LT domain. The tract at residues 273–463 (RQFDYVDSRA…LVWLDEQGKI (191 aa)) is LT domain. Glu-317 is a catalytic residue.

In the N-terminal section; belongs to the bacterial solute-binding protein 3 family. It in the C-terminal section; belongs to the transglycosylase Slt family.

The protein localises to the cell outer membrane. It carries out the reaction Exolytic cleavage of the (1-&gt;4)-beta-glycosidic linkage between N-acetylmuramic acid (MurNAc) and N-acetylglucosamine (GlcNAc) residues in peptidoglycan, from either the reducing or the non-reducing ends of the peptidoglycan chains, with concomitant formation of a 1,6-anhydrobond in the MurNAc residue.. In terms of biological role, murein-degrading enzyme that degrades murein glycan strands and insoluble, high-molecular weight murein sacculi, with the concomitant formation of a 1,6-anhydromuramoyl product. Lytic transglycosylases (LTs) play an integral role in the metabolism of the peptidoglycan (PG) sacculus. Their lytic action creates space within the PG sacculus to allow for its expansion as well as for the insertion of various structures such as secretion systems and flagella. In Alteromonas mediterranea (strain DSM 17117 / CIP 110805 / LMG 28347 / Deep ecotype), this protein is Membrane-bound lytic murein transglycosylase F.